We begin with the raw amino-acid sequence, 163 residues long: Aspartate 1-decarboxylase (163 aa).

Residue serine 25 is the Schiff-base intermediate with substrate; via pyruvic acid of the active site. Serine 25 is subject to Pyruvic acid (Ser). Residue threonine 57 coordinates substrate. The active-site Proton donor is the tyrosine 58. Substrate is bound at residue 73-75 (GAA).

This sequence belongs to the PanD family. Heterooctamer of four alpha and four beta subunits. It depends on pyruvate as a cofactor. Post-translationally, is synthesized initially as an inactive proenzyme, which is activated by self-cleavage at a specific serine bond to produce a beta-subunit with a hydroxyl group at its C-terminus and an alpha-subunit with a pyruvoyl group at its N-terminus.

The protein localises to the cytoplasm. It catalyses the reaction L-aspartate + H(+) = beta-alanine + CO2. It participates in cofactor biosynthesis; (R)-pantothenate biosynthesis; beta-alanine from L-aspartate: step 1/1. Functionally, catalyzes the pyruvoyl-dependent decarboxylation of aspartate to produce beta-alanine. This Saccharopolyspora erythraea (strain ATCC 11635 / DSM 40517 / JCM 4748 / NBRC 13426 / NCIMB 8594 / NRRL 2338) protein is Aspartate 1-decarboxylase.